We begin with the raw amino-acid sequence, 452 residues long: Mannan endo-1,6-alpha-mannosidase DCW1 (452 aa).

The signal sequence occupies residues 1-18 (MKFSIYLIISLFSSFSHA). 10 N-linked (GlcNAc...) asparagine glycosylation sites follow: Asn25, Asn81, Asn106, Asn130, Asn200, Asn237, Asn240, Asn262, Asn271, and Asn286. A lipid anchor (GPI-anchor amidated glycine) is attached at Gly431. The propeptide at 432-452 (AGIITAIIGASLVGSCVWLIL) is removed in mature form.

This sequence belongs to the glycosyl hydrolase 76 family.

The protein localises to the cell membrane. It catalyses the reaction Random hydrolysis of (1-&gt;6)-alpha-D-mannosidic linkages in unbranched (1-&gt;6)-mannans.. Its function is as follows. Probable mannosidase required for normal synthesis of the cell wall. The protein is Mannan endo-1,6-alpha-mannosidase DCW1 (DCW1) of Candida albicans (strain SC5314 / ATCC MYA-2876) (Yeast).